The chain runs to 99 residues: Protein adenylyltransferase MntA (99 aa).

The short motif at 33-47 (GSYVRGEAKEDSDVD) is the GSX(10)DXD motif element. Catalysis depends on residues aspartate 45 and aspartate 47. Mg(2+) contacts are provided by aspartate 45, aspartate 47, and aspartate 77.

It belongs to the MntA antitoxin family. Mg(2+) is required as a cofactor.

It carries out the reaction L-tyrosyl-[protein] + ATP = O-(5'-adenylyl)-L-tyrosyl-[protein] + diphosphate. The catalysed reaction is O-(5'-adenylyl)-L-tyrosyl-[protein] + ATP = O-[5'-(adenylyl-(5'-&gt;3')-adenylyl)]-L-tyrosyl-[protein] + diphosphate. Functionally, antitoxin component of a type VII toxin-antitoxin (TA) system. Overexpression in E.coli neutralizes the toxic effect of cognate toxin HepT. Neutralization is mostly due to AMPylation of the toxin by this enzyme. The sequence is that of Protein adenylyltransferase MntA from Thermococcus cleftensis (strain DSM 27260 / KACC 17922 / CL1).